Here is a 448-residue protein sequence, read N- to C-terminus: Potassium/proton antiporter CemA (448 aa).

Helical transmembrane passes span 47-67 (IVFYTNTGLNNCIFKIYLSLL), 213-233 (LSSLQYIGCLISIPSIISTLF), 314-334 (IISHSLTDIIYLITLSGLFVA), and 395-415 (IISCSVSTFPVVLDTVLKYLI).

It belongs to the CemA family.

It localises to the plastid membrane. The enzyme catalyses K(+)(in) + H(+)(out) = K(+)(out) + H(+)(in). Functionally, may be involved in proton extrusion. This Aneura mirabilis (Parasitic liverwort) protein is Potassium/proton antiporter CemA.